Consider the following 272-residue polypeptide: 3-methyl-2-oxobutanoate hydroxymethyltransferase (272 aa).

Positions 42 and 86 each coordinate Mg(2+). 3-methyl-2-oxobutanoate contacts are provided by residues 42–43 (DS), D86, and K116. Position 118 (E118) interacts with Mg(2+). E185 acts as the Proton acceptor in catalysis.

It belongs to the PanB family. Homodecamer; pentamer of dimers. It depends on Mg(2+) as a cofactor.

Its subcellular location is the cytoplasm. It catalyses the reaction 3-methyl-2-oxobutanoate + (6R)-5,10-methylene-5,6,7,8-tetrahydrofolate + H2O = 2-dehydropantoate + (6S)-5,6,7,8-tetrahydrofolate. It participates in cofactor biosynthesis; (R)-pantothenate biosynthesis; (R)-pantoate from 3-methyl-2-oxobutanoate: step 1/2. Functionally, catalyzes the reversible reaction in which hydroxymethyl group from 5,10-methylenetetrahydrofolate is transferred onto alpha-ketoisovalerate to form ketopantoate. The polypeptide is 3-methyl-2-oxobutanoate hydroxymethyltransferase (Prochlorococcus marinus (strain MIT 9313)).